Here is a 172-residue protein sequence, read N- to C-terminus: Peptide methionine sulfoxide reductase MsrA (172 aa).

Cys12 is a catalytic residue.

The protein belongs to the MsrA Met sulfoxide reductase family.

The enzyme catalyses L-methionyl-[protein] + [thioredoxin]-disulfide + H2O = L-methionyl-(S)-S-oxide-[protein] + [thioredoxin]-dithiol. It carries out the reaction [thioredoxin]-disulfide + L-methionine + H2O = L-methionine (S)-S-oxide + [thioredoxin]-dithiol. Its function is as follows. Has an important function as a repair enzyme for proteins that have been inactivated by oxidation. Catalyzes the reversible oxidation-reduction of methionine sulfoxide in proteins to methionine. This chain is Peptide methionine sulfoxide reductase MsrA, found in Ligilactobacillus salivarius (strain UCC118) (Lactobacillus salivarius).